The chain runs to 505 residues: ATP synthase subunit alpha (505 aa).

Position 171–178 (G171–T178) interacts with ATP.

Belongs to the ATPase alpha/beta chains family. F-type ATPases have 2 components, CF(1) - the catalytic core - and CF(0) - the membrane proton channel. CF(1) has five subunits: alpha(3), beta(3), gamma(1), delta(1), epsilon(1). CF(0) has three main subunits: a(1), b(2) and c(9-12). The alpha and beta chains form an alternating ring which encloses part of the gamma chain. CF(1) is attached to CF(0) by a central stalk formed by the gamma and epsilon chains, while a peripheral stalk is formed by the delta and b chains.

Its subcellular location is the cell inner membrane. The catalysed reaction is ATP + H2O + 4 H(+)(in) = ADP + phosphate + 5 H(+)(out). In terms of biological role, produces ATP from ADP in the presence of a proton gradient across the membrane. The alpha chain is a regulatory subunit. The polypeptide is ATP synthase subunit alpha (Nitratiruptor sp. (strain SB155-2)).